A 463-amino-acid chain; its full sequence is ATP-dependent protease ATPase subunit HslU (463 aa).

ATP is bound by residues V21, 63–68, D276, E341, and R413; that span reads GVGKTE.

The protein belongs to the ClpX chaperone family. HslU subfamily. In terms of assembly, a double ring-shaped homohexamer of HslV is capped on each side by a ring-shaped HslU homohexamer. The assembly of the HslU/HslV complex is dependent on binding of ATP.

The protein resides in the cytoplasm. ATPase subunit of a proteasome-like degradation complex; this subunit has chaperone activity. The binding of ATP and its subsequent hydrolysis by HslU are essential for unfolding of protein substrates subsequently hydrolyzed by HslV. HslU recognizes the N-terminal part of its protein substrates and unfolds these before they are guided to HslV for hydrolysis. This Thermotoga sp. (strain RQ2) protein is ATP-dependent protease ATPase subunit HslU.